The chain runs to 406 residues: FBD-associated F-box protein At1g60410 (406 aa).

The F-box domain maps to 9 to 59 (KDRLSDLPCHLLCRILSNLSTKESVRTSVLSPRWSNLWSLVSVLDLDFQDF). The 51-residue stretch at 355–405 (MEEIKLSPVPQCVLSSLDFLQLKAPSTPSKMKLATYFRKKCTRLTKMLLSG) folds into the FBD domain.

The protein is FBD-associated F-box protein At1g60410 of Arabidopsis thaliana (Mouse-ear cress).